The chain runs to 1509 residues: Myosin-2 heavy chain, non muscle (1509 aa).

Positions 32–85 (SDKTLAWWPTKDADRAFCHVEVTKDDGKNFTVRLENGEEKSQPKNEKNFLGVNP) constitute a Myosin N-terminal SH3-like domain. The region spanning 89-787 (DGVEDMGELG…QLAAIEELRE (699 aa)) is the Myosin motor domain. The residue at position 133 (Lys133) is an N6,N6,N6-trimethyllysine. 182-189 (GESGAGKT) provides a ligand contact to ATP. Residues 623 to 643 (APAEEEKAAAGGSRNRSTGRG) form a disordered region. Actin-binding stretches follow at residues 660–682 (LAHL…IPNL) and 766–780 (RFGV…GQLA). Residues 790–819 (ISKMVVSIQAGARAFLARRMYDKMREQTVS) enclose the IQ domain. Positions 848-1226 (LISQRNFQKE…AERDSGAQQR (379 aa)) are alpha-helical tailpiece (S2). Positions 848–1509 (LISQRNFQKE…VRAGSARAEE (662 aa)) form a coiled coil. 5 stretches are compositionally biased toward basic and acidic residues: residues 958-1019 (ELKA…KDAL), 1034-1047 (KNTE…RNEL), 1097-1107 (EDARSEVDSLK), 1115-1141 (KSLK…RANV), and 1179-1189 (QVDETKRRLEE). 6 disordered regions span residues 958-1049 (ELKA…ELDD), 1068-1141 (LAQT…RANV), 1170-1195 (AAQA…ASAA), 1213-1259 (ADLD…RLEG), 1352-1425 (VAKE…NREL), and 1474-1509 (QLQD…RAEE). A hinge region spans residues 1227–1252 (RKLNTRISELQSELENAPKTGGASSE). A compositionally biased stretch (polar residues) spans 1231–1240 (TRISELQSEL). The tract at residues 1253–1482 (EVKRLEGELE…AQLQDEIDGT (230 aa)) is alpha-helical tailpiece (LMM). Residues 1253 to 1509 (EVKRLEGELE…VRAGSARAEE (257 aa)) form a light meromyosin (LMM) region. Residues 1483–1509 (PSSRGGSTRGASARGASVRAGSARAEE) form a nonhelical tailpiece region. Residues 1484-1509 (SSRGGSTRGASARGASVRAGSARAEE) show a composition bias toward low complexity. Ser1489, Ser1494, and Ser1499 each carry phosphoserine.

This sequence belongs to the TRAFAC class myosin-kinesin ATPase superfamily. Myosin family. Myosin II heavy chain is two-headed. It self-assembles into filaments. Hexamer of 2 heavy chain subunits (MHC), 2 alkali light chain subunits (MLC) and 2 regulatory light chain subunits (MLC-2).

Its function is as follows. Myosin is a protein that binds to F-actin and has ATPase activity that is activated by F-actin. The polypeptide is Myosin-2 heavy chain, non muscle (Acanthamoeba castellanii (Amoeba)).